Here is a 389-residue protein sequence, read N- to C-terminus: Ethanolamine-phosphate cytidylyltransferase (389 aa).

Residues 221-222 (AF), 229-232 (HVDF), lysine 259, 307-310 (HGKT), and 336-340 (SGNDL) each bind CTP. Phosphothreonine occurs at positions 341 and 342.

The protein belongs to the cytidylyltransferase family.

It carries out the reaction phosphoethanolamine + CTP + H(+) = CDP-ethanolamine + diphosphate. It functions in the pathway phospholipid metabolism; phosphatidylethanolamine biosynthesis; phosphatidylethanolamine from ethanolamine: step 2/3. Functionally, ethanolamine-phosphate cytidylyltransferase that catalyzes the second step in the synthesis of phosphatidylethanolamine (PE) from ethanolamine via the CDP-ethanolamine pathway. Phosphatidylethanolamine is a dominant inner-leaflet phospholipid in cell membranes, where it plays a role in membrane function by structurally stabilizing membrane-anchored proteins, and participates in important cellular processes such as cell division, cell fusion, blood coagulation, and apoptosis. The sequence is that of Ethanolamine-phosphate cytidylyltransferase (PCYT2) from Bos taurus (Bovine).